Reading from the N-terminus, the 473-residue chain is Photosystem II CP43 reaction center protein (473 aa).

Positions 1–14 (MKTLYSLRRFYHVE) are excised as a propeptide. T15 is subject to N-acetylthreonine. T15 carries the phosphothreonine modification. 5 helical membrane-spanning segments follow: residues 69 to 93 (LFEV…PHLA), 134 to 155 (LLGP…KDRN), 178 to 200 (KALY…RKIT), 255 to 275 (KPFA…LSYS), and 291 to 312 (WFNN…ASQA). Position 367 (E367) interacts with [CaMn4O5] cluster. A helical transmembrane segment spans residues 447–471 (RARAAAAGFEKGIDRDFEPVLSMTP).

The protein belongs to the PsbB/PsbC family. PsbC subfamily. PSII is composed of 1 copy each of membrane proteins PsbA, PsbB, PsbC, PsbD, PsbE, PsbF, PsbH, PsbI, PsbJ, PsbK, PsbL, PsbM, PsbT, PsbX, PsbY, PsbZ, Psb30/Ycf12, at least 3 peripheral proteins of the oxygen-evolving complex and a large number of cofactors. It forms dimeric complexes. Binds multiple chlorophylls and provides some of the ligands for the Ca-4Mn-5O cluster of the oxygen-evolving complex. It may also provide a ligand for a Cl- that is required for oxygen evolution. PSII binds additional chlorophylls, carotenoids and specific lipids. serves as cofactor.

It is found in the plastid. The protein localises to the chloroplast thylakoid membrane. Functionally, one of the components of the core complex of photosystem II (PSII). It binds chlorophyll and helps catalyze the primary light-induced photochemical processes of PSII. PSII is a light-driven water:plastoquinone oxidoreductase, using light energy to abstract electrons from H(2)O, generating O(2) and a proton gradient subsequently used for ATP formation. This is Photosystem II CP43 reaction center protein from Draba nemorosa (Woodland whitlowgrass).